Here is a 141-residue protein sequence, read N- to C-terminus: Large ribosomal subunit protein uL11 (141 aa).

Belongs to the universal ribosomal protein uL11 family. Part of the ribosomal stalk of the 50S ribosomal subunit. Interacts with L10 and the large rRNA to form the base of the stalk. L10 forms an elongated spine to which L12 dimers bind in a sequential fashion forming a multimeric L10(L12)X complex. Post-translationally, one or more lysine residues are methylated.

In terms of biological role, forms part of the ribosomal stalk which helps the ribosome interact with GTP-bound translation factors. The sequence is that of Large ribosomal subunit protein uL11 from Clostridioides difficile (strain 630) (Peptoclostridium difficile).